The sequence spans 191 residues: Small ribosomal subunit protein eS7y (191 aa).

An N-acetylmethionine modification is found at Met-1. Positions 17–50 (TEFEEQVTQALFDLENTNQELKSELKDLYINQAV) form a coiled coil.

It belongs to the eukaryotic ribosomal protein eS7 family.

This is Small ribosomal subunit protein eS7y (RPS7B) from Arabidopsis thaliana (Mouse-ear cress).